A 341-amino-acid chain; its full sequence is Flagellar P-ring protein (341 aa).

The first 19 residues, 1–19, serve as a signal peptide directing secretion; it reads MKQVFLWLIFVLAFHKLLA.

The protein belongs to the FlgI family. In terms of assembly, the basal body constitutes a major portion of the flagellar organelle and consists of four rings (L,P,S, and M) mounted on a central rod.

Its subcellular location is the periplasm. The protein resides in the bacterial flagellum basal body. Functionally, assembles around the rod to form the L-ring and probably protects the motor/basal body from shearing forces during rotation. The chain is Flagellar P-ring protein from Helicobacter acinonychis (strain Sheeba).